A 183-amino-acid polypeptide reads, in one-letter code: Adenine phosphoribosyltransferase (183 aa).

The protein belongs to the purine/pyrimidine phosphoribosyltransferase family. In terms of assembly, homodimer.

It localises to the cytoplasm. It carries out the reaction AMP + diphosphate = 5-phospho-alpha-D-ribose 1-diphosphate + adenine. It participates in purine metabolism; AMP biosynthesis via salvage pathway; AMP from adenine: step 1/1. Catalyzes a salvage reaction resulting in the formation of AMP, that is energically less costly than de novo synthesis. The protein is Adenine phosphoribosyltransferase of Citrobacter koseri (strain ATCC BAA-895 / CDC 4225-83 / SGSC4696).